Consider the following 58-residue polypeptide: Large ribosomal subunit protein uL24 (58 aa).

This sequence belongs to the universal ribosomal protein uL24 family. Part of the 50S ribosomal subunit.

One of two assembly initiator proteins, it binds directly to the 5'-end of the 23S rRNA, where it nucleates assembly of the 50S subunit. Functionally, one of the proteins that surrounds the polypeptide exit tunnel on the outside of the subunit. This Spiroplasma citri protein is Large ribosomal subunit protein uL24 (rplX).